Reading from the N-terminus, the 711-residue chain is Acyl-CoA dehydrogenase FadE34 (711 aa).

This sequence belongs to the acyl-CoA dehydrogenase family. In terms of assembly, homodimer. FAD serves as cofactor.

The catalysed reaction is 3-oxochol-4-en-24-oyl-CoA + A = (22E)-3-oxochola-4,22-dien-24-oyl-CoA + AH2. It carries out the reaction 3beta-hydroxy-chol-5-ene-24-oyl-CoA + A = 3beta-hydroxy-chol-5,22-dien-24-oyl-CoA + AH2. Its pathway is steroid metabolism; cholesterol degradation. In terms of biological role, involved in the second cycle of side chain dehydrogenation in the beta-oxidation of cholesterol catabolism. It contributes partly to the virulence by increasing the efficiency of beta-oxidation. Catalyzes the dehydrogenation of the five-carbon steroid side chain of 3-oxo-chol-4-en-24-oyl-CoA (3-OCO-CoA) to yield 3-oxochol-4,22-dien-24-oyl-CoA. Can also use 3beta-hydroxy-chol-5-ene-24-oyl-CoA, and shows weak activity with cholyl-CoA and deoxycholyl-CoA. The polypeptide is Acyl-CoA dehydrogenase FadE34 (fadE34) (Mycobacterium tuberculosis (strain ATCC 25618 / H37Rv)).